The sequence spans 578 residues: MAVSWRSWLANEGVKHLCLLIWLSLNVLLFWKTFLLYNQGPEYYYIHQMLGLGLCLSRASASVLNLNCSLILLPMCRTVLAYLRGSQKVPSRRTRRLLDKSKTLHITCGVTICIFSGVHVAAHLVNALNFSVNYSEDFLELNAARYQNEDPRKLLFTTIPGLTGVCMVVVLFLMVTASTYAIRVSNYDIFWYTHNLFFVFYMLLLLHVSGGLLKYQTNVDTHPPGCISLNQTSSQNMSIPDYVSEHFHGSLPRGFSKLEDRYQKTLVKICLEEPKFQAHFPQTWIWISGPLCLYCAERLYRCIRSNKPVTIISVINHPSDVMELRMIKENFKARPGQYIILHCPSVSALENHPFTLTMCPTETKATFGVHFKVVGDWTERFRDLLLPPSSQDSEILPFIHSRNYPKLYIDGPFGSPFEESLNYEVSLCVAGGIGVTPFASILNTLLDDWKPYKLRRLYFIWVCRDIQSFQWFADLLCVLHNKFWQENRPDFVNIQLYLSQTDGIQKIIGEKYHTLNSRLFIGRPRWKLLFDEIAKCNRGKTVGVFCCGPSSISKTLHSLSNRNNSYGTKFEYNKESFS.

The Cytoplasmic segment spans residues 1 to 16 (MAVSWRSWLANEGVKH). The chain crosses the membrane as a helical span at residues 17 to 37 (LCLLIWLSLNVLLFWKTFLLY). The Extracellular segment spans residues 38 to 62 (NQGPEYYYIHQMLGLGLCLSRASAS). The Ferric oxidoreductase domain maps to 58-303 (RASASVLNLN…YCAERLYRCI (246 aa)). A helical membrane pass occupies residues 63 to 83 (VLNLNCSLILLPMCRTVLAYL). At 84–104 (RGSQKVPSRRTRRLLDKSKTL) the chain is on the cytoplasmic side. A helical transmembrane segment spans residues 105 to 125 (HITCGVTICIFSGVHVAAHLV). Over 126-154 (NALNFSVNYSEDFLELNAARYQNEDPRKL) the chain is Extracellular. Residue asparagine 133 is glycosylated (N-linked (GlcNAc...) asparagine). The chain crosses the membrane as a helical span at residues 155 to 175 (LFTTIPGLTGVCMVVVLFLMV). Over 176 to 188 (TASTYAIRVSNYD) the chain is Cytoplasmic. Residues 189–209 (IFWYTHNLFFVFYMLLLLHVS) form a helical membrane-spanning segment. Topologically, residues 210–424 (GGLLKYQTNV…SPFEESLNYE (215 aa)) are extracellular. The E-loop; essential for H2O2 generating catalytic activity stretch occupies residues 218 to 273 (NVDTHPPGCISLNQTSSQNMSIPDYVSEHFHGSLPRGFSKLEDRYQKTLVKICLEE). N-linked (GlcNAc...) asparagine glycosylation is present at asparagine 230. The segment at 248–575 (HGSLPRGFSK…YGTKFEYNKE (328 aa)) is mediates interaction with TLR4. Positions 304–419 (RSNKPVTIIS…DGPFGSPFEE (116 aa)) constitute an FAD-binding FR-type domain. Residues 425–445 (VSLCVAGGIGVTPFASILNTL) form a helical membrane-spanning segment. Over 446–578 (LDDWKPYKLR…KFEYNKESFS (133 aa)) the chain is Cytoplasmic.

As to quaternary structure, interacts with, relocalizes and stabilizes CYBA/p22phox. Interacts with TLR4. Interacts with protein disulfide isomerase. Interacts with PPP1R15A. Interacts with LRRC8A; this interaction prevents the ubiquitin-mediated degradation of LRRC8A. Heme is required as a cofactor. Post-translationally, N-glycosylation is required for the function. As to expression, EXpressed in brain, in all layers of the cerebellum, in pyramidal cells of the Ammon horn and in Purkinje cells (at protein level). Expressed in osteoclasts, leukocytes, kidney, liver and lung.

The protein localises to the cytoplasm. It is found in the endoplasmic reticulum membrane. Its subcellular location is the cell membrane. It localises to the cell junction. The protein resides in the focal adhesion. The protein localises to the nucleus. The enzyme catalyses NADPH + 2 O2 = 2 superoxide + NADP(+) + H(+). It carries out the reaction NADPH + O2 + H(+) = H2O2 + NADP(+). With respect to regulation, activated by insulin. Inhibited by diphenylene iodonium. Inhibited by plumbagin. Activated by phorbol 12-myristate 13-acetate (PMA). Its function is as follows. NADPH oxidase that catalyzes predominantly the reduction of oxygen to H2O2. Can also catalyze to a smaller extent, the reduction of oxygen to superoxide. May function as an oxygen sensor regulating the KCNK3/TASK-1 potassium channel and HIF1A activity. May regulate insulin signaling cascade. May play a role in apoptosis, bone resorption and lipolysaccharide-mediated activation of NFKB. May produce superoxide in the nucleus and play a role in regulating gene expression upon cell stimulation. Promotes ferroptosis, reactive oxygen species production and reduced glutathione (GSH) levels by activating NLRP3 inflammasome activation and cytokine release. The sequence is that of NADPH oxidase 4 (Nox4) from Mus musculus (Mouse).